The chain runs to 171 residues: Peptide deformylase (171 aa).

Residues Cys91 and His133 each coordinate Fe cation. Residue Glu134 is part of the active site. His137 provides a ligand contact to Fe cation.

The protein belongs to the polypeptide deformylase family. Requires Fe(2+) as cofactor.

The enzyme catalyses N-terminal N-formyl-L-methionyl-[peptide] + H2O = N-terminal L-methionyl-[peptide] + formate. Removes the formyl group from the N-terminal Met of newly synthesized proteins. Requires at least a dipeptide for an efficient rate of reaction. N-terminal L-methionine is a prerequisite for activity but the enzyme has broad specificity at other positions. This is Peptide deformylase from Mannheimia succiniciproducens (strain KCTC 0769BP / MBEL55E).